A 1303-amino-acid chain; its full sequence is DNA-directed RNA polymerase subunit beta'' (1303 aa).

Residues Cys225, Cys299, Cys306, and Cys309 each contribute to the Zn(2+) site.

Belongs to the RNA polymerase beta' chain family. RpoC2 subfamily. In terms of assembly, in plastids the minimal PEP RNA polymerase catalytic core is composed of four subunits: alpha, beta, beta', and beta''. When a (nuclear-encoded) sigma factor is associated with the core the holoenzyme is formed, which can initiate transcription. It depends on Zn(2+) as a cofactor.

The protein resides in the plastid. It is found in the chloroplast. It catalyses the reaction RNA(n) + a ribonucleoside 5'-triphosphate = RNA(n+1) + diphosphate. Functionally, DNA-dependent RNA polymerase catalyzes the transcription of DNA into RNA using the four ribonucleoside triphosphates as substrates. The polypeptide is DNA-directed RNA polymerase subunit beta'' (Rhodomonas salina (Cryptomonas salina)).